A 498-amino-acid polypeptide reads, in one-letter code: Cytochrome P450 6B1 (498 aa).

C443 is a binding site for heme.

The protein belongs to the cytochrome P450 family. It depends on heme as a cofactor. As to expression, midgut microsome.

The protein resides in the endoplasmic reticulum membrane. It localises to the microsome membrane. The catalysed reaction is an organic molecule + reduced [NADPH--hemoprotein reductase] + O2 = an alcohol + oxidized [NADPH--hemoprotein reductase] + H2O + H(+). Its function is as follows. Enables the insect to feed on furanocoumarin-producing plants and evolved as an adaptation for detoxification of xanthotoxin and other furanocoumarins. This chain is Cytochrome P450 6B1 (CYP6B1), found in Papilio polyxenes (Black swallowtail butterfly).